The chain runs to 111 residues: Cytochrome c 2.1 (111 aa).

The residue at position 2 (S2) is an N-acetylserine. Positions 20, 23, 24, and 85 each coordinate heme c.

The protein belongs to the cytochrome c family. Binds 1 heme c group covalently per subunit.

The protein resides in the mitochondrion intermembrane space. In terms of biological role, electron carrier protein. The oxidized form of the cytochrome c heme group can accept an electron from the heme group of the cytochrome c1 subunit of cytochrome reductase. Cytochrome c then transfers this electron to the cytochrome oxidase complex, the final protein carrier in the mitochondrial electron-transport chain. The sequence is that of Cytochrome c 2.1 (cyc-2.1) from Caenorhabditis elegans.